The primary structure comprises 97 residues: uncharacterized protein (97 aa).

This is an uncharacterized protein from Emericella nidulans (Aspergillus nidulans).